The following is a 465-amino-acid chain: Argininosuccinate lyase (465 aa).

This sequence belongs to the lyase 1 family. Argininosuccinate lyase subfamily.

The protein localises to the cytoplasm. It carries out the reaction 2-(N(omega)-L-arginino)succinate = fumarate + L-arginine. It participates in amino-acid biosynthesis; L-arginine biosynthesis; L-arginine from L-ornithine and carbamoyl phosphate: step 3/3. The chain is Argininosuccinate lyase from Clostridium botulinum (strain Eklund 17B / Type B).